Here is a 1039-residue protein sequence, read N- to C-terminus: L-arabinokinase (1039 aa).

The chain crosses the membrane as a helical span at residues 662–678 (AAYVAGTILVLMIELGV). Residue 693-703 (PEGKGVSSSAA) participates in ATP binding. The active-site Proton acceptor is D745.

It belongs to the GHMP kinase family.

It is found in the membrane. It carries out the reaction L-arabinose + ATP = beta-L-arabinose 1-phosphate + ADP + H(+). Arabinose kinase. Involved in the salvage pathway which converts free L-arabinose to UDP-L-arabinose. May play a role in arabinose transport. This is L-arabinokinase (ARA1) from Arabidopsis thaliana (Mouse-ear cress).